The sequence spans 458 residues: Exodeoxyribonuclease 7 large subunit (458 aa).

It belongs to the XseA family. In terms of assembly, heterooligomer composed of large and small subunits.

The protein resides in the cytoplasm. The catalysed reaction is Exonucleolytic cleavage in either 5'- to 3'- or 3'- to 5'-direction to yield nucleoside 5'-phosphates.. In terms of biological role, bidirectionally degrades single-stranded DNA into large acid-insoluble oligonucleotides, which are then degraded further into small acid-soluble oligonucleotides. This Yersinia pseudotuberculosis serotype O:1b (strain IP 31758) protein is Exodeoxyribonuclease 7 large subunit.